Here is a 248-residue protein sequence, read N- to C-terminus: Sugar fermentation stimulation protein homolog (248 aa).

The protein belongs to the SfsA family.

This is Sugar fermentation stimulation protein homolog from Methylorubrum extorquens (strain PA1) (Methylobacterium extorquens).